The sequence spans 197 residues: Imidazoleglycerol-phosphate dehydratase (197 aa).

Belongs to the imidazoleglycerol-phosphate dehydratase family.

Its subcellular location is the cytoplasm. The enzyme catalyses D-erythro-1-(imidazol-4-yl)glycerol 3-phosphate = 3-(imidazol-4-yl)-2-oxopropyl phosphate + H2O. It functions in the pathway amino-acid biosynthesis; L-histidine biosynthesis; L-histidine from 5-phospho-alpha-D-ribose 1-diphosphate: step 6/9. The chain is Imidazoleglycerol-phosphate dehydratase from Pseudomonas fluorescens (strain ATCC BAA-477 / NRRL B-23932 / Pf-5).